The chain runs to 130 residues: Small ribosomal subunit protein uS11 (130 aa).

The protein belongs to the universal ribosomal protein uS11 family. Part of the 30S ribosomal subunit. Interacts with proteins S7 and S18. Binds to IF-3.

Functionally, located on the platform of the 30S subunit, it bridges several disparate RNA helices of the 16S rRNA. Forms part of the Shine-Dalgarno cleft in the 70S ribosome. The protein is Small ribosomal subunit protein uS11 of Prochlorococcus marinus (strain MIT 9515).